The sequence spans 578 residues: Isocitrate dehydrogenase kinase/phosphatase (578 aa).

ATP is bound by residues 315 to 321 (APGIRGM) and Lys336. The active site involves Asp371.

It belongs to the AceK family.

It localises to the cytoplasm. The catalysed reaction is L-seryl-[isocitrate dehydrogenase] + ATP = O-phospho-L-seryl-[isocitrate dehydrogenase] + ADP + H(+). Functionally, bifunctional enzyme which can phosphorylate or dephosphorylate isocitrate dehydrogenase (IDH) on a specific serine residue. This is a regulatory mechanism which enables bacteria to bypass the Krebs cycle via the glyoxylate shunt in response to the source of carbon. When bacteria are grown on glucose, IDH is fully active and unphosphorylated, but when grown on acetate or ethanol, the activity of IDH declines drastically concomitant with its phosphorylation. This is Isocitrate dehydrogenase kinase/phosphatase from Escherichia coli (strain ATCC 8739 / DSM 1576 / NBRC 3972 / NCIMB 8545 / WDCM 00012 / Crooks).